A 550-amino-acid polypeptide reads, in one-letter code: Hydroxylamine reductase (550 aa).

Residues C3, C6, C18, and C25 each coordinate [2Fe-2S] cluster. Residues H249, E273, C317, C405, C433, C458, E492, and K494 each coordinate hybrid [4Fe-2O-2S] cluster. The residue at position 405 (C405) is a Cysteine persulfide.

This sequence belongs to the HCP family. [2Fe-2S] cluster is required as a cofactor. Requires hybrid [4Fe-2O-2S] cluster as cofactor.

It localises to the cytoplasm. It carries out the reaction A + NH4(+) + H2O = hydroxylamine + AH2 + H(+). Catalyzes the reduction of hydroxylamine to form NH(3) and H(2)O. The sequence is that of Hydroxylamine reductase from Salmonella typhi.